The following is a 199-amino-acid chain: MSACPAPRSPVRWLHAFTLFLLLAVLAGCVSVPKPMAGAGEDVFSRVGRFAITVTESDGKQQAVQGGFAWRDDGGSYLLDLTNPLGSTEARVEGRPGMAVLTRANGERLAAEHPDALAEDALGSPVPVTGLRDWLRGRLMAGAAPDGLERDAQGRPTAFEQDGWNARLSRYDAQGPQLLVLQRQEPGRRILVRLVITQP.

The first 28 residues, 1 to 28 (MSACPAPRSPVRWLHAFTLFLLLAVLAG), serve as a signal peptide directing secretion. The N-palmitoyl cysteine moiety is linked to residue cysteine 29. Residue cysteine 29 is the site of S-diacylglycerol cysteine attachment.

This sequence belongs to the LolB family. As to quaternary structure, monomer.

The protein resides in the cell outer membrane. Functionally, plays a critical role in the incorporation of lipoproteins in the outer membrane after they are released by the LolA protein. In Bordetella pertussis (strain Tohama I / ATCC BAA-589 / NCTC 13251), this protein is Outer-membrane lipoprotein LolB.